The chain runs to 398 residues: cAMP-dependent protein kinase type 3 (398 aa).

Phosphoserine is present on residues Ser15 and Ser55. Residues 88 to 342 form the Protein kinase domain; sequence FQILRTLGTG…SEDVKNHPWF (255 aa). ATP-binding positions include 94 to 102 and Lys117; that span reads LGTGSFGRV. The active-site Proton acceptor is Asp211. The region spanning 343-398 is the AGC-kinase C-terminal domain; the sequence is NEVIWEKLLARYIETPYEPPIQQGQGDTSQFDRYPEEEFNYGIQGEDPYMDLMKEF.

Belongs to the protein kinase superfamily. AGC Ser/Thr protein kinase family. cAMP subfamily.

It carries out the reaction L-seryl-[protein] + ATP = O-phospho-L-seryl-[protein] + ADP + H(+). The catalysed reaction is L-threonyl-[protein] + ATP = O-phospho-L-threonyl-[protein] + ADP + H(+). With respect to regulation, activated by cAMP. The sequence is that of cAMP-dependent protein kinase type 3 (TPK3) from Saccharomyces cerevisiae (strain ATCC 204508 / S288c) (Baker's yeast).